The sequence spans 191 residues: Calcium and integrin-binding protein 1 (191 aa).

Gly2 is lipidated: N-myristoyl glycine. EF-hand domains are found at residues 103-138 and 148-183; these read TPDI…LTGE and EMKQ…SPDF. Residues Asp116, Asp118, Asp120, Thr122, Asp127, Asp161, Asp163, Asp165, Thr167, and Glu172 each coordinate Ca(2+).

In terms of assembly, monomer. Interacts with the heterodimeric integrin alpha-IIb/beta3 (ITGA2B-ITGB3). Interacts with ITGA2B (via cytoplasmic domain); the interaction is direct and calcium-dependent. Interacts with the protein kinases PLK2/SNK and PRKDC (via the region immediately upstream of the kinase domain). Interacts with PLK3; the interaction inhibits PLK3 kinase activity. Interacts with PSEN2. Interacts (via C-terminus) with F8. Interacts with NBR1 (via C-terminus). Interacts with FEZ1 (via C-terminus). Interacts with UBR5 (via C-terminus); the interaction is sensitive to DNA damage, and may target CIB1 for ubiquitin-mediated degradation. Interacts with IFI6; the interaction is direct. Interacts with BCL2. Interacts with ITPR3; the interaction occurs in a calcium dependent manner. Interacts with PTK2/FAK1. Interacts with MAP3K5; the interaction inhibits MAP3K5 activation by phosphorylation, and its subsequent interaction with TRAF2. Interacts (via C-terminal region) with STMN2 (via the N-terminal region); the interaction is direct, occurs in a calcium-dependent manner and attenuates the STMN2-induced neurite outgrowth inhibition. Interacts with SPHK1, the interaction occurs in a calcium-dependent manner. Interacts with ITGA2B (via C-terminal cytoplasmic tail); the interaction occurs upon platelet aggregation and is stabilized/increased in a calcium and magnesium-dependent manner. Interacts with PAK1 (via N-terminal region); the interaction is direct and occurs in a calcium-dependent manner. Interacts with RAC3 (via C-terminal region); the interaction induces their association with the cytoskeleton upon alpha-IIb/beta3 integrin-mediated adhesion. Interacts with ITGA5 and ITGAV. Interacts with MYO1C. Interacts with ITGA2B (via C-terminal cytoplasmic tail region). Interacts (via C-terminal region) with PPP3R1; the interaction increases upon cardiomyocytes hypertrophy. Interacts with CACNA1C; the interaction increases upon cardiomyocytes hypertrophy. Interacts with TAS1R2 (via C-terminus); this interaction is independent of the myristoylation state of CIB1. Interacts and forms a complex with TMC6 and TMC8; the interaction stabilizes each component of the complex.

Its subcellular location is the membrane. The protein resides in the cell membrane. It is found in the sarcolemma. The protein localises to the apical cell membrane. It localises to the cell projection. Its subcellular location is the ruffle membrane. The protein resides in the filopodium tip. It is found in the growth cone. The protein localises to the lamellipodium. It localises to the cytoplasm. Its subcellular location is the cytoskeleton. The protein resides in the microtubule organizing center. It is found in the centrosome. The protein localises to the perinuclear region. It localises to the nucleus. Its subcellular location is the neuron projection. The protein resides in the perikaryon. Its function is as follows. Calcium-binding protein that plays a role in the regulation of numerous cellular processes, such as cell differentiation, cell division, cell proliferation, cell migration, thrombosis, angiogenesis, cardiac hypertrophy and apoptosis. Involved in bone marrow megakaryocyte differentiation by negatively regulating thrombopoietin-mediated signaling pathway. Participates in the endomitotic cell cycle of megakaryocyte, a form of mitosis in which both karyokinesis and cytokinesis are interrupted. Plays a role in integrin signaling by negatively regulating alpha-IIb/beta3 activation in thrombin-stimulated megakaryocytes preventing platelet aggregation. Up-regulates PTK2/FAK1 activity, and is also needed for the recruitment of PTK2/FAK1 to focal adhesions; it thus appears to play an important role in focal adhesion formation. Positively regulates cell migration on fibronectin in a CDC42-dependent manner, the effect being negatively regulated by PAK1. Functions as a negative regulator of stress activated MAP kinase (MAPK) signaling pathways. Down-regulates inositol 1,4,5-trisphosphate receptor-dependent calcium signaling. Involved in sphingosine kinase SPHK1 translocation to the plasma membrane in a N-myristoylation-dependent manner preventing TNF-alpha-induced apoptosis. Regulates serine/threonine-protein kinase PLK3 activity for proper completion of cell division progression. Plays a role in microtubule (MT) dynamics during neuronal development; disrupts the MT depolymerization activity of STMN2 attenuating NGF-induced neurite outgrowth and the MT reorganization at the edge of lamellipodia. Promotes cardiomyocyte hypertrophy via activation of the calcineurin/NFAT signaling pathway. Stimulates calcineurin PPP3R1 activity by mediating its anchoring to the sarcolemma. In ischemia-induced (pathological or adaptive) angiogenesis, stimulates endothelial cell proliferation, migration and microvessel formation by activating the PAK1 and ERK1/ERK2 signaling pathway. Also promotes cancer cell survival and proliferation. May regulate cell cycle and differentiation of spermatogenic germ cells, and/or differentiation of supporting Sertoli cells. Forms a complex with TMC6/EVER1 and TMC8/EVER2 in lymphocytes and keratynocytes where CIB1 stabilizes TMC6 and TMC8 levels and reciprocally. This Bos taurus (Bovine) protein is Calcium and integrin-binding protein 1 (CIB1).